Here is a 379-residue protein sequence, read N- to C-terminus: MALRKTHPLLKIANDALVDLPAPSNISAWWNFGSLLGLCLATQILTGLFLAMHYTSDIATAFSSVTHICRDVNYGWLIRNMHANGASFFFICIYMHIARGLYYGSYLYKETWNVGVILLLLVMMTAFVGYVLPWGQMSFWGATVITNLLSAVPYVGNALVQWIWGGFSVDNATLTRFFAFHFLFPFVIAAVTVIHLLFLHETGSNNPAGINSDADKISFHPYFSYKDLLGFIIMMVALTSLALFSPNLLGDPDNFTPANPLVTPPHIKPEWYFLFAYAILRSIPNKLGGVLALLASILVLMLVPFLHTSKQRGLTFRPLTQILFWTFVANVIILTWIGGMPVEHPFIIIGQVASFLYFLLLLVLSPLAGWVENKALSWA.

Helical transmembrane passes span 32–52, 76–97, 112–132, and 177–197; these read FGSL…FLAM, WLIR…YMHI, WNVG…GYVL, and FFAF…IHLL. 2 residues coordinate heme b: His-82 and His-96. Residues His-181 and His-195 each coordinate heme b. Position 200 (His-200) interacts with a ubiquinone. A run of 4 helical transmembrane segments spans residues 225 to 245, 287 to 307, 319 to 339, and 346 to 366; these read YKDL…ALFS, LGGV…PFLH, LTQI…WIGG, and FIII…VLSP.

The protein belongs to the cytochrome b family. In terms of assembly, the cytochrome bc1 complex contains 3 respiratory subunits (MT-CYB, CYC1 and UQCRFS1), 2 core proteins (UQCRC1 and UQCRC2) and probably 6 low-molecular weight proteins. It depends on heme b as a cofactor.

The protein localises to the mitochondrion inner membrane. Functionally, component of the ubiquinol-cytochrome c reductase complex (complex III or cytochrome b-c1 complex) that is part of the mitochondrial respiratory chain. The b-c1 complex mediates electron transfer from ubiquinol to cytochrome c. Contributes to the generation of a proton gradient across the mitochondrial membrane that is then used for ATP synthesis. This is Cytochrome b (mt-cyb) from Chlorophthalmus agassizi (Shortnose greeneye).